The following is a 1644-amino-acid chain: Terminal uridylyltransferase 4 (1644 aa).

3 disordered regions span residues 31–63 (NQTL…QNDI), 96–168 (CKAK…SLLL), and 205–257 (ALQN…EMDY). The span at 36-46 (ARNDKSVKEIE) shows a compositional bias: basic and acidic residues. A Phosphoserine modification is found at Ser104. The span at 112 to 125 (TISQAKSEKATSLQ) shows a compositional bias: polar residues. 2 positions are modified to phosphoserine: Ser134 and Ser156. The segment covering 206-222 (LQNSPRSQKQQTCTDNT) has biased composition (polar residues). The segment covering 238 to 252 (DLSKMKNDESNKENS) has biased composition (basic and acidic residues). The tract at residues 253–333 (SEMDYLENAT…KEKRHKKNIL (81 aa)) is required for interaction with LIN28A and pre-let-7 RNA. 4 residues coordinate Zn(2+): Cys306, Cys309, His322, and His328. The interval 579–617 (EKNSIAEENKAKADQPKDDTKKTETDNQSNAMKEKHGKS) is disordered. The span at 582–603 (SIAEENKAKADQPKDDTKKTET) shows a compositional bias: basic and acidic residues. The region spanning 628 to 678 (SLGQLWLELLKFYTLDFALEEYVICVRIQDILTRENKNWPKRRIAIEDPFS) is the PAP-associated 1 domain. A disordered region spans residues 794-816 (GQDSSSLSTSKSSEIEPKLDKKQ). A compositionally biased stretch (basic and acidic residues) spans 806–816 (SEIEPKLDKKQ). Residues 901 to 1634 (DKFILTSGKP…CATRRCRERC (734 aa)) are sufficient for monouridylation activity. The CCHC-type 1 zinc-finger motif lies at 913–930 (IVCSICKKDGHSKNDCPE). Residues 998-1001 (SSKN), 1008-1011 (SDLD), Asn1081, Lys1103, 1121-1125 (SYAYI), and His1237 each bind UTP. Positions 1009 and 1011 each coordinate Mg(2+). The 54-residue stretch at 1184-1237 (SLGELWLGLLRFYTEEFDFKEYVISIRQKKLLTTFEKQWTSKCIAIEDPFDLNH) folds into the PAP-associated 2 domain. The CCHC-type 2 zinc finger occupies 1293 to 1310 (RCCRVCGKIGHYMKDCPK). The disordered stretch occupies residues 1321–1348 (KDSEEEKEGNEEEKDSRDVLDPRDLHDT). Positions 1334–1348 (KDSRDVLDPRDLHDT) are enriched in basic and acidic residues. A CCHC-type 3 zinc finger spans residues 1357-1374 (LRCFICGDAGHVRRECPE). Positions 1401–1426 (AGSAQQQGDQSIRTRQSSECSESPSY) are enriched in low complexity. Positions 1401-1482 (AGSAQQQGDQ…LYNFPQSPPA (82 aa)) are disordered. The span at 1441–1452 (AAITQPSSQPGS) shows a compositional bias: polar residues. Over residues 1453-1470 (QPKLGPPQQGAQPPHQVQ) the composition is skewed to low complexity. The residue at position 1624 (Arg1624) is an Omega-N-methylarginine.

Belongs to the DNA polymerase type-B-like family. In terms of assembly, interacts with LIN28A in the presence of pre-let-7 RNA. Interacts with T2BP. Interacts with MOV10; the interaction is RNA-dependent. It depends on Mg(2+) as a cofactor. Requires Mn(2+) as cofactor.

The protein localises to the nucleus. It localises to the cytoplasm. The protein resides in the cytoplasmic ribonucleoprotein granule. It catalyses the reaction RNA(n) + UTP = RNA(n)-3'-uridine ribonucleotide + diphosphate. In terms of biological role, uridylyltransferase that mediates the terminal uridylation of mRNAs with short (less than 25 nucleotides) poly(A) tails, hence facilitating global mRNA decay. Essential for both oocyte maturation and fertility. Through 3' terminal uridylation of mRNA, sculpts, with TUT7, the maternal transcriptome by eliminating transcripts during oocyte growth. Involved in microRNA (miRNA)-induced gene silencing through uridylation of deadenylated miRNA targets. Also functions as an integral regulator of microRNA biogenesis using 3 different uridylation mechanisms. Acts as a suppressor of miRNA biogenesis by mediating the terminal uridylation of some miRNA precursors, including that of let-7 (pre-let-7), miR107, miR-143 and miR-200c. Uridylated miRNAs are not processed by Dicer and undergo degradation. Degradation of pre-let-7 contributes to the maintenance of embryonic stem (ES) cell pluripotency. Also catalyzes the 3' uridylation of miR-26A, a miRNA that targets IL6 transcript. This abrogates the silencing of IL6 transcript, hence promoting cytokine expression. In the absence of LIN28A, TUT7 and TUT4 monouridylate group II pre-miRNAs, which includes most of pre-let7 members, that shapes an optimal 3' end overhang for efficient processing. Adds oligo-U tails to truncated pre-miRNAS with a 5' overhang which may promote rapid degradation of non-functional pre-miRNA species. May also suppress Toll-like receptor-induced NF-kappa-B activation via binding to T2BP. Does not play a role in replication-dependent histone mRNA degradation. Due to functional redundancy between TUT4 and TUT7, the identification of the specific role of each of these proteins is difficult. TUT4 and TUT7 restrict retrotransposition of long interspersed element-1 (LINE-1) in cooperation with MOV10 counteracting the RNA chaperonne activity of L1RE1. TUT7 uridylates LINE-1 mRNAs in the cytoplasm which inhibits initiation of reverse transcription once in the nucleus, whereas uridylation by TUT4 destabilizes mRNAs in cytoplasmic ribonucleoprotein granules. In Homo sapiens (Human), this protein is Terminal uridylyltransferase 4.